Reading from the N-terminus, the 246-residue chain is tRNA pseudouridine synthase A (246 aa).

Residue Asp-52 is the Nucleophile of the active site. Residue Tyr-111 coordinates substrate.

The protein belongs to the tRNA pseudouridine synthase TruA family. In terms of assembly, homodimer.

It catalyses the reaction uridine(38/39/40) in tRNA = pseudouridine(38/39/40) in tRNA. Functionally, formation of pseudouridine at positions 38, 39 and 40 in the anticodon stem and loop of transfer RNAs. The chain is tRNA pseudouridine synthase A from Borrelia garinii subsp. bavariensis (strain ATCC BAA-2496 / DSM 23469 / PBi) (Borreliella bavariensis).